The primary structure comprises 373 residues: Putative citrate synthase 2 (373 aa).

Residues histidine 250 and glutamate 303 contribute to the active site.

It belongs to the citrate synthase family.

It carries out the reaction oxaloacetate + acetyl-CoA + H2O = citrate + CoA + H(+). It participates in carbohydrate metabolism; tricarboxylic acid cycle; isocitrate from oxaloacetate: step 1/2. In Mycobacterium bovis (strain ATCC BAA-935 / AF2122/97), this protein is Putative citrate synthase 2 (citA).